Here is a 548-residue protein sequence, read N- to C-terminus: MAAPTLTTDGPRLGQQEMKKMSPSFHPTLWGDFFLSYEAPTEAQEAEMRQRAEVLREEVRNMIKGSHDVPEIVDLIITLQRLNLDYHYEDEINEKLAVVYNSNYDGGNLDLVSRRFYLLRKCGYHVSSDVFLNFKDQYGNFIEVDTRSLLSLYNAAYLRIHGETVLDEAISFTTRCLQDRLEHLESPIAEEVSSALDTPLFRRVGTLEMKDYIPIYEKDAKQNKSILEFAKLNFNLLQLLYSSELKECTTWWKELRVESNLSFVRDRIVEVYFWMSGGCYDPQYSHSRIILTKIVAFITILDDTLDSHANSYESMQLAEAVERWDESAVSLLPEYMKDFYMYLLKTFSSFENELGPDKSYRVFYLKEAVKELVREYTKEIKWRDEDYVPKTLKEHLKVSLISIGGTLVLCSAFVGMGDVVTKKIMEWVMSDAELVKSFGIFVRLSNDIVSTKREQREKHCVSTVQCYMKQHELTMDEACEQIKELTEDSWKFMIEQGLALKEYPIIVPRTVLEFARTVDYMYKEADKYTVSHTIKDMLTSLYVKPVLM.

Mg(2+) is bound by residues Asp302 and Asp306. Residues Asp302, Asp306, Arg443, and Asn446 each contribute to the substrate site. The DDXXD motif motif lies at 302–306 (DDTLD). Residues Asn446, Ser450, and Glu454 each contribute to the Mg(2+) site.

It belongs to the terpene synthase family. Monomer. Mg(2+) is required as a cofactor. Requires Mn(2+) as cofactor. As to expression, expressed in roots. Not detected in leaves, unless damaged by herbivory or infected by fungi.

It is found in the cytoplasm. It catalyses the reaction (S)-beta-bisabolene = (S)-beta-macrocarpene. The enzyme catalyses (2E,6E)-farnesyl diphosphate = (S)-beta-bisabolene + diphosphate. The catalysed reaction is (2E)-geranyl diphosphate = (4S)-limonene + diphosphate. It carries out the reaction (2E)-geranyl diphosphate = beta-myrcene + diphosphate. It catalyses the reaction (2E)-geranyl diphosphate = terpinolene + diphosphate. The enzyme catalyses (2E)-geranyl diphosphate + H2O = (S)-linalool + diphosphate. It functions in the pathway secondary metabolite biosynthesis; terpenoid biosynthesis. Its function is as follows. Involved in the biosynthesis of the bicyclic sesquiterpene (S)-beta-macrocarpene. Can use both geranyl diphosphate and farnesyl diphosphate as substrate, but not geranylgeranyl diphosphate. Produces mainly (S)-beta-macrocarpene, but also smaller amounts of beta-bisabolene and (E)-beta-farnesene when used with farnesyl diphosphate as substrate. In the presence of geranyl diphosphate, produces the acyclic monoterpenes beta-myrcene and linalool along with minor amounts of the cyclic compounds limonene, alpha-thujene, sabinene and alpha-terpinolene. May be involved in plant defense. This Zea mays (Maize) protein is (S)-beta-macrocarpene synthase.